Here is a 371-residue protein sequence, read N- to C-terminus: Geranylgeranyl pyrophosphate synthase paxG (371 aa).

Positions 89, 92, and 121 each coordinate isopentenyl diphosphate. The Mg(2+) site is built by D128 and D132. Residue R137 coordinates dimethylallyl diphosphate. Residue R138 coordinates isopentenyl diphosphate. K215, T216, and Q249 together coordinate dimethylallyl diphosphate. Mg(2+) is bound at residue D252. Residues N256, K266, and K276 each contribute to the dimethylallyl diphosphate site. Positions 369-371 (GRV) match the Peroxisomal targeting signal motif.

Belongs to the FPP/GGPP synthase family. Mg(2+) is required as a cofactor.

The protein resides in the peroxisome. The catalysed reaction is isopentenyl diphosphate + dimethylallyl diphosphate = (2E)-geranyl diphosphate + diphosphate. It catalyses the reaction isopentenyl diphosphate + (2E)-geranyl diphosphate = (2E,6E)-farnesyl diphosphate + diphosphate. The enzyme catalyses isopentenyl diphosphate + (2E,6E)-farnesyl diphosphate = (2E,6E,10E)-geranylgeranyl diphosphate + diphosphate. The protein operates within secondary metabolite biosynthesis. In terms of biological role, geranylgeranyl pyrophosphate synthase; part of the gene cluster that mediates the biosynthesis of paxilline, a mycotoxin that acts as an inhibitor of mammalian maxi-K channels. PaxG, the geranylgeranyl diphosphate (GGPP) synthase is proposed to catalyze the first step in paxilline biosynthesis. Condensation of indole-3-glycerol phosphate with GGPP by paxC then forms 3-geranylgeranylindole (3-GGI), followed by epoxidation and cyclization of this intermediate (by paxM and paxB) to form paspaline. Paspaline is subsequently converted to 13-desoxypaxilline by paxP, the latter being then converted to paxilline by paxQ. Finally paxilline can be mono- and di-prenylated by paxD. The polypeptide is Geranylgeranyl pyrophosphate synthase paxG (Penicillium paxilli).